The chain runs to 746 residues: NAD(P)H-quinone oxidoreductase subunit 5, chloroplastic (746 aa).

The next 16 helical transmembrane spans lie at 9–29, 40–60, 89–109, 125–145, 147–167, 185–205, 219–239, 258–278, 280–300, 327–347, 354–374, 396–416, 425–445, 546–566, 607–627, and 723–743; these read WMIP…LLLF, WAFL…DLSI, IDPL…LVLI, FAYM…SNLI, VYIF…FWFT, GDFG…SFEF, NQVH…GPVA, TPIS…FLVA, LLPL…IGII, LGYM…FHLI, ALLF…VGYS, TTFL…CFWS, WLYS…TAFY, ILFP…IGIP, FSVS…KPAY, and LLLY…LNLL.

This sequence belongs to the complex I subunit 5 family. In terms of assembly, NDH is composed of at least 16 different subunits, 5 of which are encoded in the nucleus.

It is found in the plastid. The protein resides in the chloroplast thylakoid membrane. It carries out the reaction a plastoquinone + NADH + (n+1) H(+)(in) = a plastoquinol + NAD(+) + n H(+)(out). It catalyses the reaction a plastoquinone + NADPH + (n+1) H(+)(in) = a plastoquinol + NADP(+) + n H(+)(out). NDH shuttles electrons from NAD(P)H:plastoquinone, via FMN and iron-sulfur (Fe-S) centers, to quinones in the photosynthetic chain and possibly in a chloroplast respiratory chain. The immediate electron acceptor for the enzyme in this species is believed to be plastoquinone. Couples the redox reaction to proton translocation, and thus conserves the redox energy in a proton gradient. This Carica papaya (Papaya) protein is NAD(P)H-quinone oxidoreductase subunit 5, chloroplastic (ndhF).